A 100-amino-acid chain; its full sequence is Cysteine-rich venom protein VAR1 (100 aa).

The N-terminal stretch at Met-1–Ser-22 is a signal peptide. One can recognise an SCP domain in the interval Asn-41 to Glu-81.

Belongs to the CRISP family. In terms of processing, contains 8 disulfide bonds. As to expression, expressed by the venom gland.

The protein resides in the secreted. Functionally, blocks ryanodine receptors, and potassium channels. The polypeptide is Cysteine-rich venom protein VAR1 (Varanus acanthurus (Ridge-tailed monitor)).